Reading from the N-terminus, the 274-residue chain is Large ribosomal subunit protein uL2cz/uL2cy (274 aa).

2 disordered regions span residues 1 to 33 (MAIH…LIYG) and 223 to 265 (MNPV…KYND).

It belongs to the universal ribosomal protein uL2 family. Part of the 50S ribosomal subunit.

Its subcellular location is the plastid. The protein resides in the chloroplast. This Pelargonium hortorum (Common geranium) protein is Large ribosomal subunit protein uL2cz/uL2cy (rpl2-A).